A 184-amino-acid chain; its full sequence is MAFPTVEVLTELVTPVVAQHNMDLEGIRINKAGKKSLVAVSVDSDFRPDLDQLELVSNQISEVFDAGEAAGELSFGAGYTLEVGTPGLDQPLASARRWRRNRHRLVALEVEGKKSVERIGALNDDETAVIVVKRRGKKLVVRSVQLAENTQAVVEIEFAKPAEDELALTALEFDQALDRGEENK.

The protein belongs to the RimP family.

The protein resides in the cytoplasm. Required for maturation of 30S ribosomal subunits. The protein is Ribosome maturation factor RimP of Corynebacterium diphtheriae (strain ATCC 700971 / NCTC 13129 / Biotype gravis).